Consider the following 120-residue polypeptide: Glycine cleavage system H protein (120 aa).

One can recognise a Lipoyl-binding domain in the interval 17–99 (VATVGITNYA…QGAGWFFKLK (83 aa)). Lys-58 is modified (N6-lipoyllysine).

It belongs to the GcvH family. The glycine cleavage system is composed of four proteins: P, T, L and H. Requires (R)-lipoate as cofactor.

Functionally, the glycine cleavage system catalyzes the degradation of glycine. The H protein shuttles the methylamine group of glycine from the P protein to the T protein. This is Glycine cleavage system H protein from Rhizobium leguminosarum bv. trifolii (strain WSM2304).